The following is a 377-amino-acid chain: Endoplasmic reticulum-Golgi intermediate compartment protein 2 (377 aa).

Residues 1–33 (MRRLNRRKTLSLVKELDAFPKVPDSYVETSASG) lie on the Cytoplasmic side of the membrane. The chain crosses the membrane as a helical span at residues 34 to 54 (GTVSLIAFTTMALLTIMEFSV). The Lumenal portion of the chain corresponds to 55 to 319 (YQDTWMKYEY…PFWQFFVRLC (265 aa)). A helical membrane pass occupies residues 320–340 (GIIGGIFSTTGMLHGIGKFIV). Residues 341 to 377 (EIICCRFRLGSYKPVRSVPFADGHTDNHLPLLENNTH) lie on the Cytoplasmic side of the membrane.

Belongs to the ERGIC family. As to quaternary structure, may form a heteromeric complex composed of ERGIC1, ERGIC2 and ERGIC3. Interacts with ERGIC3, the interaction is required for the stable expression of both proteins. May interact with EEF1A1.

It localises to the endoplasmic reticulum-Golgi intermediate compartment membrane. The protein localises to the golgi apparatus. The protein resides in the cis-Golgi network membrane. Its subcellular location is the endoplasmic reticulum membrane. It is found in the cytoplasm. It localises to the nucleus. Its function is as follows. Possible role in transport between endoplasmic reticulum and Golgi. The polypeptide is Endoplasmic reticulum-Golgi intermediate compartment protein 2 (Ergic2) (Mus musculus (Mouse)).